A 139-amino-acid polypeptide reads, in one-letter code: Small ribosomal subunit protein bS6 (139 aa).

Over residues 114 to 133 the composition is skewed to basic and acidic residues; the sequence is KKEPREPRAPREPRVEKVDE. A disordered region spans residues 114 to 139; it reads KKEPREPRAPREPRVEKVDEQTFTEE.

It belongs to the bacterial ribosomal protein bS6 family.

Its function is as follows. Binds together with bS18 to 16S ribosomal RNA. The protein is Small ribosomal subunit protein bS6 of Campylobacter concisus (strain 13826).